A 70-amino-acid polypeptide reads, in one-letter code: Small, acid-soluble spore protein 1 (70 aa).

Belongs to the alpha/beta-type SASP family.

In terms of biological role, SASP are bound to spore DNA. They are double-stranded DNA-binding proteins that cause DNA to change to an a-like conformation. They protect the DNA backbone from chemical and enzymatic cleavage and are thus involved in dormant spore's high resistance to UV light. The protein is Small, acid-soluble spore protein 1 of Bacillus subtilis.